A 376-amino-acid polypeptide reads, in one-letter code: Deoxyguanosinetriphosphate triphosphohydrolase-like protein (376 aa).

In terms of domain architecture, HD spans 62–198 (RLTHSLEVSA…AALADDISYI (137 aa)).

This sequence belongs to the dGTPase family. Type 2 subfamily.

This is Deoxyguanosinetriphosphate triphosphohydrolase-like protein from Rickettsia canadensis (strain McKiel).